The primary structure comprises 65 residues: Protein translocase subunit SecE (65 aa).

The Cytoplasmic portion of the chain corresponds to 1–34 (MEKLRKFFREVIAEAKKISWPSRKELLTSFGVVL). Residues 35–51 (VILAVTSVYFFVLDFIF) form a helical membrane-spanning segment. Residues 52–65 (SGVVSAIFKALGIG) lie on the Extracellular side of the membrane.

Belongs to the SecE/SEC61-gamma family. As to quaternary structure, component of the Sec protein translocase complex. Heterotrimer consisting of SecY, SecE and SecG subunits. The heterotrimers can form oligomers, although 1 heterotrimer is thought to be able to translocate proteins. Interacts with SecDF, and other proteins may be involved. The channel interacts with SecA via subunit SecY.

The protein resides in the cell inner membrane. Essential subunit of the protein translocation channel SecYEG. Clamps together the 2 halves of SecY. May contact the channel plug during translocation. In Thermotoga maritima (strain ATCC 43589 / DSM 3109 / JCM 10099 / NBRC 100826 / MSB8), this protein is Protein translocase subunit SecE.